The following is a 168-amino-acid chain: Thioredoxin Y, chloroplastic (168 aa).

The N-terminal 58 residues, 1-58 (MAAFTSTTTAAAASPTPCRPAALVARSSAAPLRSAAPVVVAAGLRRAAAPSRRGATLR), are a transit peptide targeting the chloroplast. The region spanning 59–165 (VQAKKQTFSS…LIQQIESALE (107 aa)) is the Thioredoxin domain. Catalysis depends on nucleophile residues Cys-89 and Cys-92. Cysteines 89 and 92 form a disulfide.

The protein belongs to the thioredoxin family. Plant Y-type subfamily.

The protein resides in the plastid. The protein localises to the chloroplast. Its function is as follows. Probable thiol-disulfide oxidoreductase that may participate in various redox reactions. This Oryza sativa subsp. japonica (Rice) protein is Thioredoxin Y, chloroplastic.